We begin with the raw amino-acid sequence, 427 residues long: 3-phosphoshikimate 1-carboxyvinyltransferase (427 aa).

Positions 22, 23, and 27 each coordinate 3-phosphoshikimate. Lys22 is a binding site for phosphoenolpyruvate. Phosphoenolpyruvate contacts are provided by Gly96 and Arg124. 3-phosphoshikimate contacts are provided by Ser169, Ser170, Gln171, Ser197, Asp313, Asn336, and Lys340. Residue Gln171 participates in phosphoenolpyruvate binding. The active-site Proton acceptor is the Asp313. Phosphoenolpyruvate is bound by residues Arg344, Arg386, and Lys411.

The protein belongs to the EPSP synthase family. In terms of assembly, monomer.

The protein localises to the cytoplasm. The catalysed reaction is 3-phosphoshikimate + phosphoenolpyruvate = 5-O-(1-carboxyvinyl)-3-phosphoshikimate + phosphate. It participates in metabolic intermediate biosynthesis; chorismate biosynthesis; chorismate from D-erythrose 4-phosphate and phosphoenolpyruvate: step 6/7. In terms of biological role, catalyzes the transfer of the enolpyruvyl moiety of phosphoenolpyruvate (PEP) to the 5-hydroxyl of shikimate-3-phosphate (S3P) to produce enolpyruvyl shikimate-3-phosphate and inorganic phosphate. This is 3-phosphoshikimate 1-carboxyvinyltransferase from Escherichia coli (strain SMS-3-5 / SECEC).